Reading from the N-terminus, the 453-residue chain is Trigger factor (453 aa).

One can recognise a PPIase FKBP-type domain in the interval 171-256 (GDRITISFKG…VSLIEAPEEL (86 aa)).

The protein belongs to the FKBP-type PPIase family. Tig subfamily.

It is found in the cytoplasm. It carries out the reaction [protein]-peptidylproline (omega=180) = [protein]-peptidylproline (omega=0). Functionally, involved in protein export. Acts as a chaperone by maintaining the newly synthesized protein in an open conformation. Functions as a peptidyl-prolyl cis-trans isomerase. The chain is Trigger factor from Nitrobacter winogradskyi (strain ATCC 25391 / DSM 10237 / CIP 104748 / NCIMB 11846 / Nb-255).